Reading from the N-terminus, the 171-residue chain is Crossover junction endodeoxyribonuclease RuvC (171 aa).

Active-site residues include Asp11, Glu71, and Asp143. Asp11, Glu71, and Asp143 together coordinate Mg(2+).

It belongs to the RuvC family. Homodimer which binds Holliday junction (HJ) DNA. The HJ becomes 2-fold symmetrical on binding to RuvC with unstacked arms; it has a different conformation from HJ DNA in complex with RuvA. In the full resolvosome a probable DNA-RuvA(4)-RuvB(12)-RuvC(2) complex forms which resolves the HJ. The cofactor is Mg(2+).

It localises to the cytoplasm. The catalysed reaction is Endonucleolytic cleavage at a junction such as a reciprocal single-stranded crossover between two homologous DNA duplexes (Holliday junction).. Its function is as follows. The RuvA-RuvB-RuvC complex processes Holliday junction (HJ) DNA during genetic recombination and DNA repair. Endonuclease that resolves HJ intermediates. Cleaves cruciform DNA by making single-stranded nicks across the HJ at symmetrical positions within the homologous arms, yielding a 5'-phosphate and a 3'-hydroxyl group; requires a central core of homology in the junction. The consensus cleavage sequence is 5'-(A/T)TT(C/G)-3'. Cleavage occurs on the 3'-side of the TT dinucleotide at the point of strand exchange. HJ branch migration catalyzed by RuvA-RuvB allows RuvC to scan DNA until it finds its consensus sequence, where it cleaves and resolves the cruciform DNA. In Bartonella tribocorum (strain CIP 105476 / IBS 506), this protein is Crossover junction endodeoxyribonuclease RuvC.